The primary structure comprises 206 residues: Peroxynitrite isomerase (206 aa).

Residues 21-27 (GTWEGNG) carry the GXWXGXG motif. A heme b-binding site is contributed by His-190.

This sequence belongs to the nitrobindin family. As to quaternary structure, homodimer. Requires heme b as cofactor.

The catalysed reaction is peroxynitrite = nitrate. It functions in the pathway nitrogen metabolism. In terms of biological role, heme-binding protein able to scavenge peroxynitrite and to protect free L-tyrosine against peroxynitrite-mediated nitration, by acting as a peroxynitrite isomerase that converts peroxynitrite to nitrate. Therefore, this protein likely plays a role in peroxynitrite sensing and in the detoxification of reactive nitrogen and oxygen species (RNS and ROS, respectively). Is able to bind nitric oxide (NO) in vitro, but may act as a sensor of peroxynitrite levels in vivo. This chain is Peroxynitrite isomerase, found in Kocuria rhizophila (strain ATCC 9341 / DSM 348 / NBRC 103217 / DC2201).